We begin with the raw amino-acid sequence, 235 residues long: MNSKTGPSVGDATLRRRIKPWEFVAFFNPQELRKETCLLYEIKWGNQNIWRHSNQNTSQHAEINFMEKFTAERHFNSSVRCSITWFLSWSPCWECSKAIRKFLDHYPNVTLAIFISRLYWHMDQQHRQGLKELVHSGVTIQIMSYSEYHYCWRNFVDYPQGEEDYWPKYPYLWIMLYVLELHCIILGLPPCLKISGSHSNQLALFSLDLQDCHYQKIPYNVLVATGLVQPFVTWR.

In terms of domain architecture, CMP/dCMP-type deaminase spans 10-131 (GDATLRRRIK…MDQQHRQGLK (122 aa)). His-60 serves as a coordination point for Zn(2+). Glu-62 serves as the catalytic Proton donor. Positions 92 and 95 each coordinate Zn(2+).

It belongs to the cytidine and deoxycytidylate deaminase family. In terms of assembly, homodimer. Interacts with A1CF; form an mRNA editing complex. Interacts with RBM47; form an mRNA editing complex. Found in a complex with CELF2/CUGBP2 and A1CF. Interacts with HNRPAB. Interacts with SYNCRIP. The cofactor is Zn(2+).

It is found in the cytoplasm. It localises to the nucleus. The catalysed reaction is a cytidine in mRNA + H2O + H(+) = a uridine in mRNA + NH4(+). The enzyme catalyses cytidine(6666) in apoB mRNA + H2O + H(+) = uridine(6666) in apoB mRNA + NH4(+). In terms of biological role, cytidine deaminase catalyzing the cytidine to uridine postranscriptional editing of a variety of mRNAs. Form complexes with cofactors that confer differential editing activity and selectivity. Responsible for the postranscriptional editing of a CAA codon for Gln to a UAA codon for stop in the apolipoprotein B mRNA. Also involved in CGA (Arg) to UGA (Stop) editing in the NF1 mRNA. May also play a role in the epigenetic regulation of gene expression by participating in DNA demethylation. In Monodelphis domestica (Gray short-tailed opossum), this protein is C-&gt;U-editing enzyme APOBEC-1.